We begin with the raw amino-acid sequence, 426 residues long: D-tagatose-1,6-bisphosphate aldolase subunit KbaZ (426 aa).

Belongs to the GatZ/KbaZ family. KbaZ subfamily. In terms of assembly, forms a complex with KbaY.

It participates in carbohydrate metabolism; D-tagatose 6-phosphate degradation; D-glyceraldehyde 3-phosphate and glycerone phosphate from D-tagatose 6-phosphate: step 2/2. Functionally, component of the tagatose-1,6-bisphosphate aldolase KbaYZ that is required for full activity and stability of the Y subunit. Could have a chaperone-like function for the proper and stable folding of KbaY. When expressed alone, KbaZ does not show any aldolase activity. The sequence is that of D-tagatose-1,6-bisphosphate aldolase subunit KbaZ from Shigella flexneri.